A 72-amino-acid chain; its full sequence is Alpha-elapitoxin-Dpp2c (72 aa).

5 disulfides stabilise this stretch: Cys3–Cys21, Cys14–Cys42, Cys27–Cys31, Cys46–Cys57, and Cys58–Cys63.

Belongs to the three-finger toxin family. Long-chain subfamily. Type II alpha-neurotoxin sub-subfamily. In terms of tissue distribution, expressed by the venom gland.

It is found in the secreted. Its function is as follows. Binds with high affinity to muscular (alpha-1/CHRNA1) and neuronal (alpha-7/CHRNA7) nicotinic acetylcholine receptor (nAChR) and inhibits acetylcholine from binding to the receptor, thereby impairing neuromuscular and neuronal transmission. The polypeptide is Alpha-elapitoxin-Dpp2c (Dendroaspis polylepis polylepis (Black mamba)).